The sequence spans 172 residues: Adenine phosphoribosyltransferase (172 aa).

The protein belongs to the purine/pyrimidine phosphoribosyltransferase family. In terms of assembly, homodimer.

It is found in the cytoplasm. It catalyses the reaction AMP + diphosphate = 5-phospho-alpha-D-ribose 1-diphosphate + adenine. It participates in purine metabolism; AMP biosynthesis via salvage pathway; AMP from adenine: step 1/1. In terms of biological role, catalyzes a salvage reaction resulting in the formation of AMP, that is energically less costly than de novo synthesis. The polypeptide is Adenine phosphoribosyltransferase (Exiguobacterium sibiricum (strain DSM 17290 / CCUG 55495 / CIP 109462 / JCM 13490 / 255-15)).